The chain runs to 610 residues: Methionine--tRNA ligase (610 aa).

The short motif at 12 to 22 (PYANGPRHIGH) is the 'HIGH' region element. Positions 144, 147, 157, and 160 each coordinate Zn(2+). The short motif at 348–352 (KFSSS) is the 'KMSKS' region element. Ser-351 contributes to the ATP binding site.

It belongs to the class-I aminoacyl-tRNA synthetase family. MetG type 1 subfamily. As to quaternary structure, monomer. Requires Zn(2+) as cofactor.

It is found in the cytoplasm. The enzyme catalyses tRNA(Met) + L-methionine + ATP = L-methionyl-tRNA(Met) + AMP + diphosphate. Its function is as follows. Is required not only for elongation of protein synthesis but also for the initiation of all mRNA translation through initiator tRNA(fMet) aminoacylation. This is Methionine--tRNA ligase from Corynebacterium diphtheriae (strain ATCC 700971 / NCTC 13129 / Biotype gravis).